A 447-amino-acid chain; its full sequence is MKDLISIIDVKDHVGETVKIGAWVADKSGKGKLQFLQLRDGTAFFQAVVFKPNMIENFGEEEGTAKFDEIKHLSQETSVYVTGVVKEDSRSKFGYELDVTDLEVIGQSHDYPITPKEHGVEFLLDNRHLWLRSKRQMAMMQVRNAIIYASYDFFAKNGFIKFDSPILSGNAAENTTELFETDYFGNSAFLSQSGQLYLEAGAMALGRVFDFGPVFRAEKSKTRRHLTEFWMMDAEYPFVTHDESLDIQEAYVKALIQGVLDNAAYALETLERDTSMLQKYIDTPFKRVSYDAAIDLLQAHENDEDTDYEHVEHGDDFGSPHETWISNYYGVPTFIVNYPASFKAFYMKPVPGNPERVLCADLLAPEGYGEIIGGSERETDYDLLLKKIADFGLDPKDYDWYLELRKFGSVPHAGFGLGLERMVTFVAGTEHIREAIPFPRMINRIQP.

It belongs to the class-II aminoacyl-tRNA synthetase family. In terms of assembly, homodimer.

The protein resides in the cytoplasm. It carries out the reaction tRNA(Asn) + L-asparagine + ATP = L-asparaginyl-tRNA(Asn) + AMP + diphosphate + H(+). The sequence is that of Asparagine--tRNA ligase from Lactococcus lactis subsp. lactis (strain IL1403) (Streptococcus lactis).